The sequence spans 438 residues: Aspartate--tRNA(Asp/Asn) ligase (438 aa).

Glu176 is an L-aspartate binding site. Positions 198-201 are aspartate; the sequence is QLYK. Arg220 is an L-aspartate binding site. Residues 220–222, 228–230, and Glu361 contribute to the ATP site; these read RAE and RHL. Residues Glu361 and Ser364 each contribute to the Mg(2+) site. Ser364 and Arg368 together coordinate L-aspartate. 409–412 is an ATP binding site; the sequence is GADR.

It belongs to the class-II aminoacyl-tRNA synthetase family. Type 2 subfamily. In terms of assembly, homodimer. It depends on Mg(2+) as a cofactor.

The protein resides in the cytoplasm. The enzyme catalyses tRNA(Asx) + L-aspartate + ATP = L-aspartyl-tRNA(Asx) + AMP + diphosphate. Functionally, aspartyl-tRNA synthetase with relaxed tRNA specificity since it is able to aspartylate not only its cognate tRNA(Asp) but also tRNA(Asn). Reaction proceeds in two steps: L-aspartate is first activated by ATP to form Asp-AMP and then transferred to the acceptor end of tRNA(Asp/Asn). The sequence is that of Aspartate--tRNA(Asp/Asn) ligase from Methanococcus vannielii (strain ATCC 35089 / DSM 1224 / JCM 13029 / OCM 148 / SB).